Here is a 602-residue protein sequence, read N- to C-terminus: Fumarate reductase flavoprotein subunit (602 aa).

Residues 12–16 (GAGGA), 36–38 (ISK), 44–52 (SHTVAAEGG), 156–158 (HFV), 192–193 (AT), and Asp-212 contribute to the FAD site. The residue at position 45 (His-45) is a Tele-8alpha-FAD histidine. Active-site residues include His-233 and Arg-249. FAD is bound by residues 356 to 357 (HY), Glu-380, and 391 to 397 (RLGSNSL). The disordered stretch occupies residues 581–602 (YGGEADAADKAEAANKKEKANG). Over residues 587-602 (AADKAEAANKKEKANG) the composition is skewed to basic and acidic residues.

This sequence belongs to the FAD-dependent oxidoreductase 2 family. FRD/SDH subfamily. Part of an enzyme complex containing four subunits: a flavoprotein (FrdA), an iron-sulfur protein (FrdB), and two hydrophobic anchor proteins (FrdC and FrdD). Can be cross-linked to SdhE. Purified from membrane fractions associated with protoporphyrinogen IX dehydrogenase (hemG). FAD serves as cofactor.

It localises to the cell inner membrane. It catalyses the reaction a quinone + succinate = fumarate + a quinol. The enzyme catalyses a menaquinone + succinate = a menaquinol + fumarate. Inhibited by oxaloacetate, a substrate analog. Functionally, two distinct, membrane-bound, FAD-containing enzymes are responsible for the catalysis of fumarate and succinate interconversion; fumarate reductase is used during anaerobic growth, and succinate dehydrogenase is used during aerobic growth. The QFR enzyme complex binds 2 quinones in or near the membrane; 1 near the [3Fe-4S] cluster (QP is proximal to the [3Fe-4S] cluster, on the cytoplasmic side of the membrane) while QD (the distal cluster) is on the other side of the membrane. It is not clear if both of the quinol-binding sites are functionally relevant. The chain is Fumarate reductase flavoprotein subunit (frdA) from Escherichia coli (strain K12).